Consider the following 146-residue polypeptide: 3-dehydroquinate dehydratase (146 aa).

The active-site Proton acceptor is the Tyr22. 3 residues coordinate substrate: Asn74, His80, and Asp87. His100 (proton donor) is an active-site residue. Substrate-binding positions include 101–102 (LS) and Arg111.

Belongs to the type-II 3-dehydroquinase family. As to quaternary structure, homododecamer.

The catalysed reaction is 3-dehydroquinate = 3-dehydroshikimate + H2O. Its pathway is metabolic intermediate biosynthesis; chorismate biosynthesis; chorismate from D-erythrose 4-phosphate and phosphoenolpyruvate: step 3/7. Catalyzes a trans-dehydration via an enolate intermediate. This is 3-dehydroquinate dehydratase from Clostridium perfringens (strain SM101 / Type A).